A 102-amino-acid polypeptide reads, in one-letter code: uncharacterized protein (102 aa).

2 helical membrane passes run 28–48 (YLNL…LISI) and 81–101 (LSVL…AGIG).

The protein resides in the membrane. This is an uncharacterized protein from Saccharomyces cerevisiae (strain ATCC 204508 / S288c) (Baker's yeast).